The primary structure comprises 508 residues: Light-independent protochlorophyllide reductase subunit B (508 aa).

Asp36 provides a ligand contact to [4Fe-4S] cluster. Asp294 (proton donor) is an active-site residue. 429–430 (GM) lines the substrate pocket.

Belongs to the ChlB/BchB/BchZ family. In terms of assembly, protochlorophyllide reductase is composed of three subunits; ChlL, ChlN and ChlB. Forms a heterotetramer of two ChlB and two ChlN subunits. [4Fe-4S] cluster is required as a cofactor.

It catalyses the reaction chlorophyllide a + oxidized 2[4Fe-4S]-[ferredoxin] + 2 ADP + 2 phosphate = protochlorophyllide a + reduced 2[4Fe-4S]-[ferredoxin] + 2 ATP + 2 H2O. Its pathway is porphyrin-containing compound metabolism; chlorophyll biosynthesis (light-independent). Functionally, component of the dark-operative protochlorophyllide reductase (DPOR) that uses Mg-ATP and reduced ferredoxin to reduce ring D of protochlorophyllide (Pchlide) to form chlorophyllide a (Chlide). This reaction is light-independent. The NB-protein (ChlN-ChlB) is the catalytic component of the complex. This Synechocystis sp. (strain ATCC 27184 / PCC 6803 / Kazusa) protein is Light-independent protochlorophyllide reductase subunit B.